A 349-amino-acid chain; its full sequence is Protein RecA (349 aa).

65–72 is a binding site for ATP; it reads GPESSGKT.

Belongs to the RecA family.

It is found in the cytoplasm. Functionally, can catalyze the hydrolysis of ATP in the presence of single-stranded DNA, the ATP-dependent uptake of single-stranded DNA by duplex DNA, and the ATP-dependent hybridization of homologous single-stranded DNAs. It interacts with LexA causing its activation and leading to its autocatalytic cleavage. This chain is Protein RecA, found in Enterococcus faecium (Streptococcus faecium).